The chain runs to 281 residues: sn-glycerol-3-phosphate transport system permease protein UgpE (281 aa).

6 consecutive transmembrane segments (helical) span residues Leu-16–Leu-36, Phe-85–Phe-105, Phe-113–Val-133, Leu-142–Phe-162, Ala-202–Ile-222, and Trp-247–Val-267. Residues Leu-77–Met-268 enclose the ABC transmembrane type-1 domain.

It belongs to the binding-protein-dependent transport system permease family. UgpAE subfamily. The complex is composed of two ATP-binding proteins (UgpC), two transmembrane proteins (UgpA and UgpE) and a solute-binding protein (UgpB).

The protein localises to the cell inner membrane. Part of the ABC transporter complex UgpBAEC involved in sn-glycerol-3-phosphate (G3P) import. Probably responsible for the translocation of the substrate across the membrane. In Shigella dysenteriae serotype 1 (strain Sd197), this protein is sn-glycerol-3-phosphate transport system permease protein UgpE (ugpE).